A 762-amino-acid chain; its full sequence is Molybdenum cofactor sulfurase 2 (762 aa).

At K234 the chain carries N6-(pyridoxal phosphate)lysine. Residue C400 is part of the active site. Residues A590–V738 enclose the MOSC domain.

This sequence belongs to the class-V pyridoxal-phosphate-dependent aminotransferase family. MOCOS subfamily. Pyridoxal 5'-phosphate serves as cofactor.

The catalysed reaction is Mo-molybdopterin + L-cysteine + AH2 = thio-Mo-molybdopterin + L-alanine + A + H2O. In terms of biological role, sulfurates the molybdenum cofactor. Sulfation of molybdenum is essential for xanthine dehydrogenase (XDH) and aldehyde oxidase (ADO) enzymes in which molybdenum cofactor is liganded by 1 oxygen and 1 sulfur atom in active form. The polypeptide is Molybdenum cofactor sulfurase 2 (Aedes aegypti (Yellowfever mosquito)).